Consider the following 323-residue polypeptide: COP9 signalosome complex subunit 6 (323 aa).

One can recognise an MPN domain in the interval 37-170 (VALHPLVILN…VSVFESVIDI (134 aa)).

The protein belongs to the peptidase M67A family. CSN6 subfamily. In terms of assembly, component of the CSN complex, composed of COPS1/GPS1, COPS2, COPS3, COPS4, COPS5, COPS6, COPS7 (COPS7A or COPS7B), COPS8 and COPS9. In the complex, it probably interacts directly with COPS2, COPS4, COPS5, COPS7 (COPS7A or COPS7B) and COPS9. Interacts with the translation initiation factor EIF3S6. Interacts weakly with RBX1. Directly interacts with COP1 and 14-3-3 protein sigma/SFN. Interacts with ERCC6.

It is found in the cytoplasm. The protein resides in the nucleus. Component of the COP9 signalosome complex (CSN), a complex involved in various cellular and developmental processes. The CSN complex is an essential regulator of the ubiquitin (Ubl) conjugation pathway by mediating the deneddylation of the cullin subunits of SCF-type E3 ligase complexes, leading to decrease the Ubl ligase activity of SCF-type complexes such as SCF, CSA or DDB2. The complex is also involved in phosphorylation of p53/TP53, c-jun/JUN, IkappaBalpha/NFKBIA, ITPK1 and IRF8, possibly via its association with CK2 and PKD kinases. CSN-dependent phosphorylation of TP53 and JUN promotes and protects degradation by the Ubl system, respectively. Has some glucocorticoid receptor-responsive activity. Stabilizes COP1 through reducing COP1 auto-ubiquitination and decelerating COP1 turnover rate, hence regulates the ubiquitination of COP1 targets, including SFN. This Sus scrofa (Pig) protein is COP9 signalosome complex subunit 6 (COPS6).